The following is a 369-amino-acid chain: Deacetylase EF_0837 (369 aa).

Zn(2+)-binding residues include H58, H60, K152, H186, H209, and D270. N6-carboxylysine is present on K152.

It belongs to the metallo-dependent hydrolases superfamily. Atu3266/EF_0837 deacetylase family. Zn(2+) is required as a cofactor.

Its function is as follows. Esterase that can catalyze the deacetylation of acetyl-(R)-mandelate, but with very low efficiency (in vitro). This Enterococcus faecalis (strain ATCC 700802 / V583) protein is Deacetylase EF_0837.